The chain runs to 113 residues: Protein ZEO1 (113 aa).

A compositionally biased stretch (polar residues) spans 1–16 (MSEIQNKAETAAQDVQ). The interval 1-96 (MSEIQNKAET…AVSEKKETKK (96 aa)) is disordered. Ser-2 is subject to N-acetylserine. Phosphoserine is present on Ser-2. Positions 2 to 97 (SEIQNKAETA…VSEKKETKKE (96 aa)) form a coiled coil. Positions 17 to 37 (QKLEETKESLQNKGQEVKEQA) are enriched in basic and acidic residues. Residues Lys-18 and Lys-23 each participate in a glycyl lysine isopeptide (Lys-Gly) (interchain with G-Cter in ubiquitin) cross-link. The residue at position 25 (Ser-25) is a Phosphoserine. Residues Lys-29 and Lys-34 each participate in a glycyl lysine isopeptide (Lys-Gly) (interchain with G-Cter in ubiquitin) cross-link. Ser-40 carries the phosphoserine modification. Lys-45 is covalently cross-linked (Glycyl lysine isopeptide (Lys-Gly) (interchain with G-Cter in ubiquitin)). Thr-49 is modified (phosphothreonine). Residues 53–82 (EQVKKEEQNIADGVEQKKTEAANKVEETKK) are compositionally biased toward basic and acidic residues. Glycyl lysine isopeptide (Lys-Gly) (interchain with G-Cter in ubiquitin) cross-links involve residues Lys-57 and Lys-82.

As to quaternary structure, interacts with MID2. Post-translationally, phosphorylation of Ser-25 is induced 2-fold in response to mating pheromone.

It localises to the cell membrane. In terms of biological role, acts antagonistically to MID2 in signaling cell wall stress to the PKC1-MPK1 cell integrity pathway. The polypeptide is Protein ZEO1 (ZEO1) (Saccharomyces cerevisiae (strain ATCC 204508 / S288c) (Baker's yeast)).